The primary structure comprises 102 residues: Small ribosomal subunit protein uS10 (102 aa).

The protein belongs to the universal ribosomal protein uS10 family. As to quaternary structure, part of the 30S ribosomal subunit.

In terms of biological role, involved in the binding of tRNA to the ribosomes. This chain is Small ribosomal subunit protein uS10, found in Agrobacterium fabrum (strain C58 / ATCC 33970) (Agrobacterium tumefaciens (strain C58)).